We begin with the raw amino-acid sequence, 202 residues long: Protein-methionine-sulfoxide reductase heme-binding subunit MsrQ (202 aa).

6 consecutive transmembrane segments (helical) span residues 8-28 (LAVF…AWIF), 42-62 (LGLG…LQKL), 75-95 (LGLW…VFIL), 110-130 (PYII…ITSN), 147-167 (LVYL…RADL), and 169-189 (EWTL…PSIA).

Belongs to the MsrQ family. As to quaternary structure, heterodimer of a catalytic subunit (MsrP) and a heme-binding subunit (MsrQ). The cofactor is FMN. It depends on heme b as a cofactor.

It is found in the cell inner membrane. In terms of biological role, part of the MsrPQ system that repairs oxidized periplasmic proteins containing methionine sulfoxide residues (Met-O), using respiratory chain electrons. Thus protects these proteins from oxidative-stress damage caused by reactive species of oxygen and chlorine generated by the host defense mechanisms. MsrPQ is essential for the maintenance of envelope integrity under bleach stress, rescuing a wide series of structurally unrelated periplasmic proteins from methionine oxidation. MsrQ provides electrons for reduction to the reductase catalytic subunit MsrP, using the quinone pool of the respiratory chain. This Pseudomonas aeruginosa (strain UCBPP-PA14) protein is Protein-methionine-sulfoxide reductase heme-binding subunit MsrQ.